Consider the following 504-residue polypeptide: Heat shock 70 kDa protein 14 (504 aa).

It belongs to the heat shock protein 70 family. In terms of assembly, component of ribosome-associated complex (RAC).

It localises to the cytoplasm. It is found in the cytosol. Its function is as follows. Component of the ribosome-associated complex (RAC), a complex involved in folding or maintaining nascent polypeptides in a folding-competent state. This chain is Heat shock 70 kDa protein 14 (hspa14), found in Danio rerio (Zebrafish).